The chain runs to 212 residues: uncharacterized protein (212 aa).

The first 20 residues, 1 to 20 (MKNLTIGAIFLIFFAVSAFA), serve as a signal peptide directing secretion.

The protein resides in the virion. This is an uncharacterized protein from Acanthamoeba polyphaga (Amoeba).